Reading from the N-terminus, the 246-residue chain is MSSAYDRVSKNYRQSELDKFAAFTSGWWDPHGPQKPLHALNPVRLDYISKRVPLSGARVLDVGCGGGLLSEALARQGAHVTAIDLAPELIKVARLHGLESGIQVDYRIQAIEDLLAEQPAPFDAIACMEMLEHVPDPAAIVDACAHLLKPGGRLFVSTINRTLAAFMLAVVGAEYVVRLLPKGTHQYKDFIRPAELAAWLRHAGLHLEDVSGMRYEPWRNRARLTDRTDINYLACAISPEAPHATE.

Residues R44, G63, D84, and M128 each coordinate S-adenosyl-L-methionine.

This sequence belongs to the methyltransferase superfamily. UbiG/COQ3 family.

The catalysed reaction is a 3-demethylubiquinol + S-adenosyl-L-methionine = a ubiquinol + S-adenosyl-L-homocysteine + H(+). The enzyme catalyses a 3-(all-trans-polyprenyl)benzene-1,2-diol + S-adenosyl-L-methionine = a 2-methoxy-6-(all-trans-polyprenyl)phenol + S-adenosyl-L-homocysteine + H(+). It participates in cofactor biosynthesis; ubiquinone biosynthesis. Functionally, O-methyltransferase that catalyzes the 2 O-methylation steps in the ubiquinone biosynthetic pathway. This is Ubiquinone biosynthesis O-methyltransferase from Xylella fastidiosa (strain 9a5c).